Here is an 81-residue protein sequence, read N- to C-terminus: Xenopsin peptides (81 aa).

The first 20 residues, 1–20 (MYKGIFLCVLLAVICANSLA), serve as a signal peptide directing secretion. Residues 21–37 (TPSSDADEDNDEVERYV) constitute a propeptide that is removed on maturation. A propeptide spans 65-73 (EAMLRSAEA) (removed in mature form by a dipeptidylpeptidase).

This sequence belongs to the gastrin/cholecystokinin family. Magainin subfamily. XPF is synthesized in the stomach and stored in a novel granular multinucleated cell in the gastric mucosa, it is stored as active, processed peptides in large granules within the granular gland secretions of the skin.

The protein resides in the secreted. In terms of biological role, xenopsin is a neurotensin-like octapeptide. Its function is as follows. XPF has antimicrobial activity. This Xenopus laevis (African clawed frog) protein is Xenopsin peptides.